A 246-amino-acid polypeptide reads, in one-letter code: Cell division protein ZapD (246 aa).

It belongs to the ZapD family. As to quaternary structure, interacts with FtsZ.

It localises to the cytoplasm. In terms of biological role, cell division factor that enhances FtsZ-ring assembly. Directly interacts with FtsZ and promotes bundling of FtsZ protofilaments, with a reduction in FtsZ GTPase activity. This is Cell division protein ZapD from Vibrio parahaemolyticus serotype O3:K6 (strain RIMD 2210633).